Here is a 753-residue protein sequence, read N- to C-terminus: MERARPEPPPQPRPLRPAPPPLPVEGTSFWAAAMEPPPSSPTLSAAASATLASSCGEAVASGLQPAVRRLLQVKPEQVLLLPQPQAQNEEAAASSAQARLLQFRPDLRLLQPPTASDGATSRPELHPVQPLALHVKAKKQKLGPSLDQSVGPRGAVETGPRASRVVKLEGPGPALGYFRGDEKGKLEAEEVMRDSMQGGAGKSPAAIREGVIKTEEPERLLEDCRLGAEPASNGLVHGSAEVILAPTSGAFGPHQQDLRIPLTLHTVPPGARIQFQGAPPSELIRLTKVPLTPVPTKMQSLLEPSVKIETKDVPLTVLPSDAGIPDTPFSKDRNGHVKRPMNAFMVWARIHRPALAKANPAANNAEISVQLGLEWNKLSEEQKKPYYDEAQKIKEKHREEFPGWVYQPRPGKRKRFPLSVSNVFSGTTQNIISTNPTTVYPYRSPTYSVVIPSLQNPITHPVGETSPAIQLPTPAVQSPSPVTLFQPSVSSAAQVAVQDPSLPVYPALPPQRFTGPSQTDTHQLHSEATHTVKQPTPVSLESANRISSSASTAHARFATSTIQPPREYSSVSPCPRSAPIPQASPIPHPHVYQPPPLGHPATLFGTPPRFSFHHPYFLPGPHYFPSSTCPYSRPPFGYGNFPSSMPECLSYYEDRYPKHEGIFSTLNRDYSFRDYSSECTHSENSRSCENMNGTSYYNSHSHSGEENLNPVPQLDIGTLENVFTAPTSTPSSIQQVNVTDSDEEEEEKVLRDL.

Disordered stretches follow at residues 1-45 (MERA…TLSA) and 137-161 (AKKQ…TGPR). Over residues 7–23 (EPPPQPRPLRPAPPPLP) the composition is skewed to pro residues. The segment at residues 337–405 (VKRPMNAFMV…KHREEFPGWV (69 aa)) is a DNA-binding region (HMG box). 2 disordered regions span residues 514 to 575 (TGPS…SPCP) and 726 to 753 (PTST…LRDL). 2 stretches are compositionally biased toward polar residues: residues 531 to 563 (TVKQ…STIQ) and 726 to 739 (PTST…VNVT).

In terms of assembly, interacts with CTNNB1, competitively inhibiting CTNNB1-TCF7L2/TCF4 interaction.

It localises to the nucleus. The protein resides in the cytoplasm. In terms of biological role, acts both as a transcriptional activator and a repressor. Binds to the DNA sequence 5'-ACAAT-3' and shows a preference for guanine residues surrounding this core motif. Binds to its own promoter and activates its own transcription. Required to activate the expression of postmeiotic genes involved in spermiogenesis. Binds to the promoter region of CTNNB1 and represses its transcription which leads to inhibition of Wnt signaling. Also inhibits Wnt signaling by binding to the CTNNB1 protein, preventing interaction of CTNNB1 with TCF7L2/TCF4. This Homo sapiens (Human) protein is Transcription factor SOX-30 (SOX30).